A 548-amino-acid polypeptide reads, in one-letter code: Zinc metalloproteinase (548 aa).

Positions 1 to 28 (MKKYYAVTGIALAVGMLCTTQLAGATQA) are cleaved as a signal peptide. Histidine 362 contacts Zn(2+). Residue glutamate 363 is part of the active site. Zn(2+) is bound by residues histidine 366 and glutamate 386. The segment at 440 to 459 (SNWKPTATNPNDNNDQGGVH) is disordered. The span at 442–459 (WKPTATNPNDNNDQGGVH) shows a compositional bias: polar residues. Catalysis depends on histidine 459, which acts as the Proton donor.

The protein belongs to the peptidase M4 family. It depends on Ca(2+) as a cofactor. Zn(2+) serves as cofactor.

It localises to the secreted. Its subcellular location is the cell wall. Zinc metalloprotease with hemolytic properties. The protein is Zinc metalloproteinase (hly) of Renibacterium salmoninarum.